Reading from the N-terminus, the 220-residue chain is MNRIFGRGKPKGPPPNLTDCISGVDSRAESVDKKIARLDAELMKYKDQMKKMRDGPSKNMVKQKAMRVLKQKRMYEGQRDQLMQQSFNMEQANYTIQTLKDTKTTVEAMKIGAKEMKKAYKNVKIDQIEDLQDQLEDMMEDANEVQEALSRSYGTPEIDEDDLEAELDALGDELLLDDDNSYLDEASSAPAIPEGAPGDRTTNRDGVLVDEFGLPQIPAT.

The segment covering 1 to 10 (MNRIFGRGKP) has biased composition (basic residues). The segment at 1–27 (MNRIFGRGKPKGPPPNLTDCISGVDSR) is disordered. Coiled coils occupy residues 25–55 (DSRA…MRDG) and 121–153 (KNVK…SRSY). The disordered stretch occupies residues 178-206 (DDNSYLDEASSAPAIPEGAPGDRTTNRDG).

This sequence belongs to the SNF7 family. As to quaternary structure, probable peripherally associated component of the endosomal sorting required for transport complex III (ESCRT-III).

It localises to the cytoplasm. Its subcellular location is the cytosol. The protein resides in the endosome membrane. Probable peripherally associated component of the endosomal sorting required for transport complex III (ESCRT-III) which is involved in multivesicular bodies (MVBs) formation and sorting of endosomal cargo proteins into MVBs. MVBs contain intraluminal vesicles (ILVs) that are generated by invagination and scission from the limiting membrane of the endosome and mostly are delivered to lysosomes enabling degradation of membrane proteins, such as stimulated growth factor receptors, lysosomal enzymes and lipids. This is Charged multivesicular body protein 5 (chmp5) from Danio rerio (Zebrafish).